The sequence spans 243 residues: 2,3-bisphosphoglycerate-dependent phosphoglycerate mutase (243 aa).

Residues 8–15 (RHGQSEWN), 21–22 (TG), R60, 87–90 (ERHY), K98, 114–115 (RR), and 183–184 (GN) contribute to the substrate site. H9 serves as the catalytic Tele-phosphohistidine intermediate. The active-site Proton donor/acceptor is E87.

This sequence belongs to the phosphoglycerate mutase family. BPG-dependent PGAM subfamily. Homodimer.

The enzyme catalyses (2R)-2-phosphoglycerate = (2R)-3-phosphoglycerate. It participates in carbohydrate degradation; glycolysis; pyruvate from D-glyceraldehyde 3-phosphate: step 3/5. Functionally, catalyzes the interconversion of 2-phosphoglycerate and 3-phosphoglycerate. In Maricaulis maris (strain MCS10) (Caulobacter maris), this protein is 2,3-bisphosphoglycerate-dependent phosphoglycerate mutase.